We begin with the raw amino-acid sequence, 235 residues long: MPEKLAKAIANPLFPALDNALRSGRHVSSEDLDNHALLIEFERELGMFYRRYNTELIRAPEGFFYLRPRSTSLIGRSVLSEIDMLVGKVLCFLYLSPERLAHEGIFTNQELFDELLVLADEKKLMKFVTHRASGSDLDREKLYDKVKTSLRRLRRIGMLIPIGENGKFRISESVFRFGADVRTGDDVREAQLRLIRDGEAVVHQQEPSQSSLLDGFDADDTGHHDSELTMQEGEV.

Positions 204-235 (QQEPSQSSLLDGFDADDTGHHDSELTMQEGEV) are disordered.

Belongs to the MukE family. In terms of assembly, interacts, and probably forms a ternary complex, with MukF and MukB. The complex formation is stimulated by calcium or magnesium.

The protein localises to the cytoplasm. Its subcellular location is the nucleoid. Functionally, involved in chromosome condensation, segregation and cell cycle progression. May participate in facilitating chromosome segregation by condensation DNA from both sides of a centrally located replisome during cell division. Probably acts via its interaction with MukB and MukF. In Photobacterium profundum (strain SS9), this protein is Chromosome partition protein MukE.